Here is a 244-residue protein sequence, read N- to C-terminus: Phosphonates import ATP-binding protein PhnC 2 (244 aa).

The 239-residue stretch at 6–244 (IECHNLETAY…LQAQFVVNNQ (239 aa)) folds into the ABC transporter domain. 41–48 (GLNGAGKS) is a binding site for ATP.

This sequence belongs to the ABC transporter superfamily. Phosphonates importer (TC 3.A.1.9.1) family. The complex is composed of two ATP-binding proteins (PhnC), two transmembrane proteins (PhnE) and a solute-binding protein (PhnD).

It is found in the cell inner membrane. It catalyses the reaction phosphonate(out) + ATP + H2O = phosphonate(in) + ADP + phosphate + H(+). Its function is as follows. Part of the ABC transporter complex PhnCDE involved in phosphonates import. Responsible for energy coupling to the transport system. The sequence is that of Phosphonates import ATP-binding protein PhnC 2 from Nostoc sp. (strain PCC 7120 / SAG 25.82 / UTEX 2576).